Consider the following 137-residue polypeptide: Protein LTO1 homolog (137 aa).

Alanine 2 is subject to N-acetylalanine. A Phosphoserine modification is found at serine 4. A deca-GX3 motif; required for interaction with YAE1 and the CIA complex region spans residues 22-58 (GYREGYEEGSSLGVMEGRQHGTLHGAKIGSEIGCYQG).

The protein belongs to the LTO1 family. As to quaternary structure, forms a complex with YAE1. Interacts with PYCR1 and PYCR2. Widely expressed. Highly expressed in placenta, kidney and skeletal muscle.

It is found in the nucleus. The complex LTO1:YAE1 functions as a target specific adapter that probably recruits apo-ABCE1 to the cytosolic iron-sulfur protein assembly (CIA) complex machinery. May be required for biogenesis of the large ribosomal subunit and initiation of translation. May play a role in the regulation of proline metabolism and ROS production. This Homo sapiens (Human) protein is Protein LTO1 homolog.